A 1004-amino-acid chain; its full sequence is 2-oxoglutarate dehydrogenase E1 component (1004 aa).

It belongs to the alpha-ketoglutarate dehydrogenase family. Homodimer. Part of the 2-oxoglutarate dehydrogenase (OGDH) complex composed of E1 (2-oxoglutarate dehydrogenase), E2 (dihydrolipoamide succinyltransferase) and E3 (dihydrolipoamide dehydrogenase); the complex contains multiple copies of the three enzymatic components (E1, E2 and E3). Thiamine diphosphate is required as a cofactor.

It carries out the reaction N(6)-[(R)-lipoyl]-L-lysyl-[protein] + 2-oxoglutarate + H(+) = N(6)-[(R)-S(8)-succinyldihydrolipoyl]-L-lysyl-[protein] + CO2. E1 component of the 2-oxoglutarate dehydrogenase (OGDH) complex which catalyzes the decarboxylation of 2-oxoglutarate, the first step in the conversion of 2-oxoglutarate to succinyl-CoA and CO(2). The sequence is that of 2-oxoglutarate dehydrogenase E1 component from Brucella abortus (strain S19).